The primary structure comprises 420 residues: UDP-N-acetylglucosamine 1-carboxyvinyltransferase (420 aa).

22–23 contributes to the phosphoenolpyruvate binding site; it reads KN. Residue Arg93 participates in UDP-N-acetyl-alpha-D-glucosamine binding. The Proton donor role is filled by Cys117. The residue at position 117 (Cys117) is a 2-(S-cysteinyl)pyruvic acid O-phosphothioketal. UDP-N-acetyl-alpha-D-glucosamine contacts are provided by Asp307 and Ile329.

This sequence belongs to the EPSP synthase family. MurA subfamily.

It localises to the cytoplasm. The catalysed reaction is phosphoenolpyruvate + UDP-N-acetyl-alpha-D-glucosamine = UDP-N-acetyl-3-O-(1-carboxyvinyl)-alpha-D-glucosamine + phosphate. It functions in the pathway cell wall biogenesis; peptidoglycan biosynthesis. Functionally, cell wall formation. Adds enolpyruvyl to UDP-N-acetylglucosamine. In Shewanella halifaxensis (strain HAW-EB4), this protein is UDP-N-acetylglucosamine 1-carboxyvinyltransferase.